Consider the following 382-residue polypeptide: Alkaline serine protease ver112 (382 aa).

An N-terminal signal peptide occupies residues M1–A15. Residues A16–N102 constitute a propeptide that is removed on maturation. An Inhibitor I9 domain is found at S56 to F99. The Peptidase S8 domain occupies T111–T382. Cystine bridges form between C138-C227 and C282-C353. Residues D143, H173, and S328 each act as charge relay system in the active site.

The protein belongs to the peptidase S8 family.

The protein localises to the secreted. Inhibited by phenylmethylsulfonyl fluoride (PMSF). Its function is as follows. Serine protease which can degrade the nematode cuticle. The protein is Alkaline serine protease ver112 of Corniculantispora psalliotae (Lecanicillium psalliotae).